Consider the following 215-residue polypeptide: Calmodulin-like protein 5 (215 aa).

Positions 38-61 (KNSPPSPSTMLPSPSSSSAPTKRI) are disordered. Residues 45–57 (STMLPSPSSSSAP) show a composition bias toward low complexity. 4 EF-hand domains span residues 61 to 96 (IDPS…LGIY), 97 to 132 (IPDK…IVDE), 139 to 174 (TEEE…LGLK), and 177 to 212 (KTLD…GGFS). Ca(2+) is bound by residues Asp74, Asn76, Asp78, Arg80, Glu85, Asp110, Asn112, Asp114, Cys116, Glu121, Asp152, Asp154, Asp156, Glu163, Asp190, Asp192, Asp194, Arg196, and Glu201.

The protein belongs to the calmodulin family.

Functionally, potential calcium sensor. In Arabidopsis thaliana (Mouse-ear cress), this protein is Calmodulin-like protein 5 (CML5).